Here is a 259-residue protein sequence, read N- to C-terminus: 5'-nucleotidase SurE (259 aa).

Residues Asp-8, Asp-9, Ser-40, and Asn-95 each contribute to the a divalent metal cation site.

It belongs to the SurE nucleotidase family. A divalent metal cation is required as a cofactor.

It localises to the cytoplasm. It carries out the reaction a ribonucleoside 5'-phosphate + H2O = a ribonucleoside + phosphate. In terms of biological role, nucleotidase that shows phosphatase activity on nucleoside 5'-monophosphates. This Oleidesulfovibrio alaskensis (strain ATCC BAA-1058 / DSM 17464 / G20) (Desulfovibrio alaskensis) protein is 5'-nucleotidase SurE.